The chain runs to 358 residues: Probable isocitrate dehydrogenase [NAD] subunit alpha, mitochondrial (358 aa).

The substrate site is built by Arg108, Arg118, Arg139, and Asp226. Residues Asp226, Asp250, and Asp254 each coordinate Mg(2+).

It belongs to the isocitrate and isopropylmalate dehydrogenases family. In terms of assembly, heterooligomer of subunits alpha, beta, and gamma in the apparent ratio of 2:1:1. Mg(2+) is required as a cofactor. It depends on Mn(2+) as a cofactor.

Its subcellular location is the mitochondrion. The catalysed reaction is D-threo-isocitrate + NAD(+) = 2-oxoglutarate + CO2 + NADH. The protein is Probable isocitrate dehydrogenase [NAD] subunit alpha, mitochondrial (idha-1) of Caenorhabditis elegans.